We begin with the raw amino-acid sequence, 351 residues long: Alanine racemase (351 aa).

Lys35 serves as the catalytic Proton acceptor; specific for D-alanine. N6-(pyridoxal phosphate)lysine is present on Lys35. Arg127 is a substrate binding site. The Proton acceptor; specific for L-alanine role is filled by Tyr247. Position 295 (Met295) interacts with substrate.

The protein belongs to the alanine racemase family. The cofactor is pyridoxal 5'-phosphate.

The enzyme catalyses L-alanine = D-alanine. Its pathway is amino-acid biosynthesis; D-alanine biosynthesis; D-alanine from L-alanine: step 1/1. Functionally, catalyzes the interconversion of L-alanine and D-alanine. May also act on other amino acids. The sequence is that of Alanine racemase (alr) from Vesicomyosocius okutanii subsp. Calyptogena okutanii (strain HA).